The primary structure comprises 705 residues: Tyrosine decarboxylase (705 aa).

Residues 22 to 32 are compositionally biased toward polar residues; that stretch reads RIRNSLSPSRP. The disordered stretch occupies residues 22 to 81; sequence RIRNSLSPSRPSMSEATATGSSSSSRASTTIPSTPNMDVTPTVEDPRQNDNNASGMTRDE. The span at 33-55 shows a compositional bias: low complexity; that stretch reads SMSEATATGSSSSSRASTTIPST. The residue at position 380 (K380) is an N6-(pyridoxal phosphate)lysine. The stretch at 554 to 620 forms a coiled coil; the sequence is VKAVIAEEDE…AQKQHESLAK (67 aa). Polar residues predominate over residues 667-678; it reads HSQRPNRLSQSP. Residues 667-687 form a disordered region; the sequence is HSQRPNRLSQSPGSAGSAFFD.

It belongs to the group II decarboxylase family. Pyridoxal 5'-phosphate serves as cofactor. As to expression, expressed in the gonadal sheath projections in between the oocytes, in head RIM motor neurons and RIC interneurons.

Its subcellular location is the cytoplasm. It is found in the cell projection. The protein resides in the axon. The protein localises to the perikaryon. The enzyme catalyses L-tyrosine + H(+) = tyramine + CO2. In terms of biological role, required for the decarboxylation of tyrosine to tyramine, a precursor of octopamine but probably also itself a neurotransmitter. Involved in the regulation of egg laying, which is inhibited by tyramine. Also involved in controlling locomotion and head movements. Due to its involvement in octopamine biosynthesis, also required for crtc-1-dependent regulation of AMPK-mediated longevity which requires octopamine signaling. The sequence is that of Tyrosine decarboxylase from Caenorhabditis elegans.